The sequence spans 611 residues: Calmegin (611 aa).

An N-terminal signal peptide occupies residues 1 to 19 (MRFQGVGLCLGLLFITVNA). Over 20–471 (DFMDDGVEVE…LVIAAEERPW (452 aa)) the chain is Lumenal. Lys128 carries the post-translational modification N6-acetyllysine. Cys151 and Cys185 form a disulfide bridge. Positions 254-335 (LDDVVPPINP…KAEKPEDWSD (82 aa)) are disordered. Over residues 265 to 284 (REIDDPSDKKPEEWDDRAKI) the composition is skewed to basic and acidic residues. 8 repeat units span residues 267 to 280 (IDDP…EWDD), 284 to 297 (IPDP…DWDE), 303 to 316 (IEDS…GWLD), 322 to 335 (IPNP…DWSD), 339 to 352 (GEWE…PACQ), 356 to 369 (GEWK…PKYK), 370 to 383 (GIWR…PNYQ), and 384 to 397 (GLWS…PDYF). An interaction with PPIB region spans residues 317 to 350 (DEPKFIPNPKAEKPEDWSDDMDGEWEAPHIPNPA). Cysteines 351 and 355 form a disulfide. A helical transmembrane segment spans residues 472 to 492 (LWLMYLVMAGLPVALVASFCW). Topologically, residues 493–611 (PRKVKKKYED…SLRKRRVRKD (119 aa)) are cytoplasmic. The segment at 517-611 (AALEQEAEEE…SLRKRRVRKD (95 aa)) is disordered. Over residues 526–584 (EKAPEKPEDVQEEKKPGEAEVVTVEKEVIGEPEEKSKEDRETLEGQEEVSKLSKSGSED) the composition is skewed to basic and acidic residues. A phosphoserine mark is found at Ser561, Ser578, Ser580, Ser582, Ser592, Ser595, and Ser602. Positions 602 to 611 (SLRKRRVRKD) are enriched in basic residues.

It belongs to the calreticulin family. In terms of assembly, interacts with PDILT and PPIB. Interacts with ADAM2. Interacts with ADAM1A, ADAM1B and ADAM3; these are protein-coding genes in mouse but may be pseudogenes in other organisms. As to expression, detected in testis (at protein level). Detected in testis.

The protein localises to the endoplasmic reticulum membrane. Functions during spermatogenesis as a chaperone for a range of client proteins that are important for sperm adhesion onto the egg zona pellucida and for subsequent penetration of the zona pellucida. Required for normal sperm migration from the uterus into the oviduct. Required for normal male fertility. Binds calcium ions. The chain is Calmegin (Clgn) from Mus musculus (Mouse).